A 490-amino-acid chain; its full sequence is Monocarboxylate transporter 3 (490 aa).

At 1–14 (MGAGGPRRGAGPPD) the chain is on the cytoplasmic side. Residues 15 to 35 (GGWGWVVLGACFVITGFAYGF) form a helical membrane-spanning segment. The Extracellular portion of the chain corresponds to 36-58 (PKAVSVFFRELKRDFGAGYSDTA). The chain crosses the membrane as a helical span at residues 59-79 (WVSSIMLAMLYGTGPLSSILV). Topologically, residues 80 to 85 (TRFGCR) are cytoplasmic. The chain crosses the membrane as a helical span at residues 86-106 (PVMLAGGLLASAGMILASFAS). The Extracellular segment spans residues 107–115 (RLLELYLTA). Residues 116–136 (GVLTGLGLALNFQPSLIMLGL) form a helical membrane-spanning segment. At 137–147 (YFERRRPLANG) the chain is on the cytoplasmic side. A helical transmembrane segment spans residues 148 to 168 (LAAAGSPVFLSTLSPLGQLLG). Residues 169-172 (ERFG) are Extracellular-facing. Residues 173 to 193 (WRGGFLLFGGLLLHCCACGAV) traverse the membrane as a helical segment. The Cytoplasmic portion of the chain corresponds to 194-230 (MRPPPGPQPRPDPAPPGGRARHRQLLDLAVCTDRTFM). A helical transmembrane segment spans residues 231-251 (VYMVTKFLMALGLFVPAILLV). The Extracellular segment spans residues 252–257 (NYAKDA). A helical membrane pass occupies residues 258-278 (GVPDAEAAFLLSIVGFVDIVA). Topologically, residues 279–293 (RPACGALAGLGRLRP) are cytoplasmic. The helical transmembrane segment at 294–314 (HVPYLFSLALLANGLTDLISA) threads the bilayer. Residues 315-318 (RARS) lie on the Extracellular side of the membrane. A helical transmembrane segment spans residues 319-339 (YGTLVAFCIAFGLSYGMVGAL). The Cytoplasmic portion of the chain corresponds to 340-352 (QFEVLMATVGAPR). A helical membrane pass occupies residues 353–373 (FPSALGLVLLVEAVAVLIGPP). The Extracellular portion of the chain corresponds to 374–386 (SAGRLVDALKNYE). Residues 387-407 (IIFYLAGSEVVLAGVFMAVTT) form a helical membrane-spanning segment. At 408 to 490 (YCCQRCSKDI…GGHEAHGQNA (83 aa)) the chain is on the cytoplasmic side. Residues 419 to 490 (PGPSAEGGTS…GGHEAHGQNA (72 aa)) are disordered. Basolateral sorting signal regions lie at residues 426–460 (GTSD…VLSP) and 461–480 (RAGS…HESV). Over residues 475 to 490 (LSHESVGGHEAHGQNA) the composition is skewed to basic and acidic residues.

Belongs to the major facilitator superfamily. Monocarboxylate porter (TC 2.A.1.13) family. As to expression, retinal pigment epithelium.

It is found in the basolateral cell membrane. The catalysed reaction is (S)-lactate(in) + H(+)(in) = (S)-lactate(out) + H(+)(out). Probable retinal pigment epithelium (RPE)-specific proton-coupled L-lactate transporter. May facilitate transport of lactate and H(+) out of the retina and could therefore play a role in pH and ion homeostasis of the outer retina. This chain is Monocarboxylate transporter 3 (Slc16a8), found in Rattus norvegicus (Rat).